The primary structure comprises 481 residues: Velvet complex subunit B (481 aa).

Disordered stretches follow at residues 1-157 (MNSA…YSKI) and 241-339 (GTGA…NGYG). Composition is skewed to pro residues over residues 36–45 (HPPPPLPPPS), 53–62 (PPLPPPPSAP), and 96–112 (PYAPAPYQQPQPSQYPR). In terms of domain architecture, Velvet spans 160-464 (GSGWKYSLDV…ANQGIKIPIR (305 aa)). Composition is skewed to low complexity over residues 241 to 255 (GTGAMASSSTYTYSS) and 293 to 325 (QQSYGQAPSYPPSSSYGPPQQYYPRHSGYSAEP).

The protein belongs to the velvet family. VelB subfamily. As to quaternary structure, component of the heterotrimeric velvet complex composed of laeA, veA and velB; VeA acting as a bridging protein between laeA and velB. Forms a heterodimeric complex with vosA; the formation of the velB-vosA complex is light-dependent.

It is found in the nucleus. Its subcellular location is the cytoplasm. Its function is as follows. Component of the velvet transcription factor complex that controls sexual/asexual developmental ratio in response to light, promoting sexual development in the darkness while stimulating asexual sporulation under illumination. The velvet complex acts as a global regulator for secondary metabolite gene expression. Component of the velB-VosA heterodimeric complex that plays a dual role in activating genes associated with spore maturation and repressing certain development-associated genes. The velB-VosA complex binds DNA through the DNA-binding domain of vosA that recognizes an 11-nucleotide consensus sequence 5'-CTGGCCGCGGC-3' consisting of two motifs in the promoters of key developmental regulatory genes. Controls the biosynthetic gene cluster for beauvericin, a depsipeptide mycotoxin that functions as a virulence determinant. Also regulates chromatin structure and transcription of siderophore biosynthetic genes and is required for infection of tomato plants. In Fusarium oxysporum f. sp. lycopersici (strain 4287 / CBS 123668 / FGSC 9935 / NRRL 34936) (Fusarium vascular wilt of tomato), this protein is Velvet complex subunit B.